The chain runs to 245 residues: UPF0319 protein VV0984 (245 aa).

The first 20 residues, 1–20 (MRYIGKWMMLGALVSSSVFA), serve as a signal peptide directing secretion.

Belongs to the UPF0319 family.

The chain is UPF0319 protein VV0984 from Vibrio vulnificus (strain YJ016).